The primary structure comprises 311 residues: Thioredoxin reductase (311 aa).

FAD contacts are provided by residues 31 to 39 and 32 to 39; these read FEKGMPGGQ and EKGMPGGQ. An intrachain disulfide couples Cys-133 to Cys-136. FAD is bound at residue 281–290; it reads DIRIFAPKQV.

This sequence belongs to the class-II pyridine nucleotide-disulfide oxidoreductase family. As to quaternary structure, homodimer. FAD serves as cofactor.

The protein localises to the cytoplasm. It catalyses the reaction [thioredoxin]-dithiol + NADP(+) = [thioredoxin]-disulfide + NADPH + H(+). In Helicobacter pylori (strain J99 / ATCC 700824) (Campylobacter pylori J99), this protein is Thioredoxin reductase (trxB).